The chain runs to 462 residues: Cysteine--tRNA ligase (462 aa).

Position 24 (Cys24) interacts with Zn(2+). The 'HIGH' region motif lies at 26 to 36; sequence PTVYDDAHLGH. Zn(2+)-binding residues include Cys199, His224, and Glu228. Residues 256 to 260 carry the 'KMSKS' region motif; sequence KMSKS. Position 259 (Lys259) interacts with ATP.

This sequence belongs to the class-I aminoacyl-tRNA synthetase family. In terms of assembly, monomer. Zn(2+) serves as cofactor.

It is found in the cytoplasm. The enzyme catalyses tRNA(Cys) + L-cysteine + ATP = L-cysteinyl-tRNA(Cys) + AMP + diphosphate. The chain is Cysteine--tRNA ligase from Campylobacter jejuni subsp. doylei (strain ATCC BAA-1458 / RM4099 / 269.97).